The following is a 162-amino-acid chain: Disulfide bond formation protein B (162 aa).

Residues 1–8 (MTPLFRKA) are Cytoplasmic-facing. Residues 9–25 (VWLLFAVSVCAFAGSLA) traverse the membrane as a helical segment. Topologically, residues 26 to 43 (AQYVLGMEPCVLCISQRL) are periplasmic. An intrachain disulfide couples cysteine 35 to cysteine 38. A helical membrane pass occupies residues 44-60 (CVLATALCAAVVLACKP). The Cytoplasmic segment spans residues 61–67 (KGRVGGL). The chain crosses the membrane as a helical span at residues 68–85 (SGAVFISIPAVTGISVAA). Residues 86 to 141 (YQLWLQSLPPGAAPSCGAPWTFRLKGWPLFDWFEPVVRGFGNCAEPDYLLGVALPV) lie on the Periplasmic side of the membrane. A disulfide bridge links cysteine 101 with cysteine 128. Residues 142–160 (WSAAYFLAVVLTVWWAWAR) traverse the membrane as a helical segment. Over 161–162 (AK) the chain is Cytoplasmic.

It belongs to the DsbB family.

The protein resides in the cell inner membrane. Its function is as follows. Required for disulfide bond formation in some periplasmic proteins. Acts by oxidizing the DsbA protein. The sequence is that of Disulfide bond formation protein B from Neisseria gonorrhoeae (strain ATCC 700825 / FA 1090).